Here is a 228-residue protein sequence, read N- to C-terminus: Ribose-5-phosphate isomerase A (228 aa).

Substrate contacts are provided by residues 29–32 (TGST), 85–88 (DGAD), and 98–101 (KGGG). Glutamate 107 functions as the Proton acceptor in the catalytic mechanism. Lysine 125 contacts substrate.

It belongs to the ribose 5-phosphate isomerase family. As to quaternary structure, homodimer.

The enzyme catalyses aldehydo-D-ribose 5-phosphate = D-ribulose 5-phosphate. Its pathway is carbohydrate degradation; pentose phosphate pathway; D-ribose 5-phosphate from D-ribulose 5-phosphate (non-oxidative stage): step 1/1. In terms of biological role, catalyzes the reversible conversion of ribose-5-phosphate to ribulose 5-phosphate. The polypeptide is Ribose-5-phosphate isomerase A (Staphylococcus aureus (strain MRSA252)).